The sequence spans 137 residues: Small ribosomal subunit protein uS9 (137 aa).

The interval 103 to 137 (PPLKAEGYLTRDPRAKERKKYGLHKARKAPQYSKR) is disordered. Over residues 118 to 137 (KERKKYGLHKARKAPQYSKR) the composition is skewed to basic residues.

It belongs to the universal ribosomal protein uS9 family.

The polypeptide is Small ribosomal subunit protein uS9 (Crocosphaera subtropica (strain ATCC 51142 / BH68) (Cyanothece sp. (strain ATCC 51142))).